The primary structure comprises 193 residues: UPF0301 protein Bfl251 (193 aa).

It belongs to the UPF0301 (AlgH) family.

The protein is UPF0301 protein Bfl251 of Blochmanniella floridana.